The chain runs to 713 residues: MLSSSSMSSSSLSARFCFNHECFEFKLDHCRPGWRLRSGDFVDLCDRCASAYEQGKFCDVFHQRASGWRCCESCGKRIHCGCIASASAYTLMDAGGIECLACARKKFALGPNFSPSPSFLFQSPISEKFKDLSINWSSSTRSNQISYQPPSCLDPSVLQFDFRNRGGNNEFSQPASKERVTACTMEKKRGMNDMIGKLMSENSKHYRVSPFPNVNVYHPLISLKEGPCGTQLAFPVPITTPIEKTGHSRLDGSNLWHTRNSSPLSRLHNDLNGGADSPFESKSRNVMAHLETPGKYQVVPRFWPKVSYKNQVLQNQSKESESVVTPLFEKILSATDTGKRLVLPKKYAEAFLPQLSHTKGVPLTVQDPMGKEWRFQFRFWPSSKGRIYVLEGVTPFIQTLQLQAGDTVIFSRLDPERKLILGFRKASITQSSDQADPADMHSPFEVKKSAYITKETPGVECSSGKKKSSMMITRSKRQKVEKGDDNLLKLTWEEAQGFLLPPPNLTPSRVVIEDYEFEEYEEAPIIGKPTDVAGSTCTEVEGLLISPTTTKHPRHRDGCTCIICIQSPSGIGPKHDRCCSCAVCDTNKRRRRSLLLRREKKQMEKEDNARKLLEQLNSDNGLHQSANNSENHERHASPLKVQLDLNFKPEKDEESLPGSNKTTKSETLPHDDTVKSSFTSPSSSSAHSQNNKEDEGKLKTTTEIADTTTTSSM.

Residues 328 to 427 (FEKILSATDT…KLILGFRKAS (100 aa)) constitute a DNA-binding region (TF-B3). 2 disordered regions span residues 459–478 (VECSSGKKKSSMMITRSKRQ) and 616–713 (LNSD…TSSM). Residues 464–477 (GKKKSSMMITRSKR) are compositionally biased toward basic residues. A compositionally biased stretch (polar residues) spans 616-629 (LNSDNGLHQSANNS). Positions 663-674 (TKSETLPHDDTV) are enriched in basic and acidic residues. Positions 676 to 688 (SSFTSPSSSSAHS) are enriched in low complexity. Positions 690-700 (NNKEDEGKLKT) are enriched in basic and acidic residues. Over residues 701-713 (TTEIADTTTTSSM) the composition is skewed to low complexity.

The protein localises to the nucleus. May be involved in plant development. The polypeptide is B3 domain-containing transcription factor VAL3 (VAL3) (Arabidopsis thaliana (Mouse-ear cress)).